Reading from the N-terminus, the 453-residue chain is Cholesterol 7-desaturase nvd (453 aa).

Residues 53-73 (IVEYILILTLMFAFSAILYVI) traverse the membrane as a helical segment. The Rieske domain maps to 126 to 229 (WFAVAETREL…VVETDGAIWI (104 aa)). Residues Cys167, His169, Cys187, and His190 each contribute to the [2Fe-2S] cluster site.

Belongs to the cholesterol 7-desaturase family. Requires [2Fe-2S] cluster as cofactor.

It is found in the membrane. The catalysed reaction is cholesterol + NADPH + O2 + H(+) = 7-dehydrocholesterol + NADP(+) + 2 H2O. It carries out the reaction cholesterol + NADH + O2 + H(+) = 7-dehydrocholesterol + NAD(+) + 2 H2O. It participates in steroid hormone biosynthesis; dafachronic acid biosynthesis. Functionally, catalyzes the production of 7-dehydrocholesterol (7-DHC or cholesta-5,7-dien-3beta-ol) by inserting a double bond (desaturating) at the C7-C8 single bond of cholesterol. Essential regulator of steroid biosynthesis as this reaction is the first step in the synthesis of the steroid hormone Delta(7)-dafachronic acid. This is Cholesterol 7-desaturase nvd from Bombyx mori (Silk moth).